We begin with the raw amino-acid sequence, 239 residues long: ATP-dependent dethiobiotin synthetase BioD (239 aa).

15-20 serves as a coordination point for ATP; that stretch reads EIGKTF. Mg(2+) is bound at residue threonine 19. Lysine 40 is a catalytic residue. ATP-binding positions include aspartate 57, 118-121, and 178-179; these read EGAG and NH. Mg(2+) is bound by residues aspartate 57 and glutamate 118.

Belongs to the dethiobiotin synthetase family. Homodimer. Mg(2+) is required as a cofactor.

The protein resides in the cytoplasm. It carries out the reaction (7R,8S)-7,8-diammoniononanoate + CO2 + ATP = (4R,5S)-dethiobiotin + ADP + phosphate + 3 H(+). The protein operates within cofactor biosynthesis; biotin biosynthesis; biotin from 7,8-diaminononanoate: step 1/2. Functionally, catalyzes a mechanistically unusual reaction, the ATP-dependent insertion of CO2 between the N7 and N8 nitrogen atoms of 7,8-diaminopelargonic acid (DAPA, also called 7,8-diammoniononanoate) to form a ureido ring. In Burkholderia lata (strain ATCC 17760 / DSM 23089 / LMG 22485 / NCIMB 9086 / R18194 / 383), this protein is ATP-dependent dethiobiotin synthetase BioD.